The following is a 388-amino-acid chain: MKGKVVALLHKESTIGILLIIATLLALFLENSPLSSFYDSFLHTPVEIRFGALHIAKPLLLWVNDGLMAVFFFYVGLEIKREIVDGHLSQISQMTFPAIAALGGMVVPALLFASLNFHDEKALNGWAIPTATDIAFALGVLSLLGNRIPFSLKVFLMTLAIVDDLGAIIVIALFYTTKLSLTSLVVASIALTILFIMNRMCVISKGAYILVGVALWVSVLKSGVHATLAGVALALLIPYRINKNGKIYELTKQMEHGLHLWVNFFILPLFAFANAGVNLQNISMSELFGSVPMGIMLGLFIGKQLGVFGFGYLAVKLKIAKLPKESTLIQFYGVAVLAGIGFTMSLFIDSLAYEDAQIYQYADKLAVLIGSLLSGIWGYIVLSKSSAP.

Transmembrane regions (helical) follow at residues 14–34, 59–79, 95–115, 125–145, 154–174, 177–197, 200–220, 222–242, 257–277, 295–315, 328–348, and 362–382; these read TIGI…NSPL, LLLW…GLEI, TFPA…FASL, GWAI…SLLG, VFLM…IALF, TKLS…LFIM, MCVI…VSVL, SGVH…YRIN, GLHL…NAGV, IMLG…YLAV, LIQF…SLFI, and ADKL…YIVL.

It belongs to the NhaA Na(+)/H(+) (TC 2.A.33) antiporter family.

The protein localises to the cell inner membrane. It carries out the reaction Na(+)(in) + 2 H(+)(out) = Na(+)(out) + 2 H(+)(in). Na(+)/H(+) antiporter that extrudes sodium in exchange for external protons. This chain is Na(+)/H(+) antiporter NhaA, found in Nitratiruptor sp. (strain SB155-2).